Reading from the N-terminus, the 223-residue chain is Ribonuclease 3 (223 aa).

Positions 4–127 (YSQLEKRLNY…IIGAVYLEAG (124 aa)) constitute an RNase III domain. Glutamate 40 provides a ligand contact to Mg(2+). Residue aspartate 44 is part of the active site. Asparagine 113 and glutamate 116 together coordinate Mg(2+). The active site involves glutamate 116. A DRBM domain is found at 154-223 (DYKTALQELT…AKIALEALKK (70 aa)).

It belongs to the ribonuclease III family. As to quaternary structure, homodimer. Requires Mg(2+) as cofactor.

It localises to the cytoplasm. The catalysed reaction is Endonucleolytic cleavage to 5'-phosphomonoester.. Digests double-stranded RNA. Involved in the processing of primary rRNA transcript to yield the immediate precursors to the large and small rRNAs (23S and 16S). Processes some mRNAs, and tRNAs when they are encoded in the rRNA operon. Processes pre-crRNA and tracrRNA of type II CRISPR loci if present in the organism. The polypeptide is Ribonuclease 3 (Sulfurovum sp. (strain NBC37-1)).